The following is a 444-amino-acid chain: Acyl-CoA (8-3)-desaturase (444 aa).

Position 1 is an N-acetylmethionine (methionine 1). The Cytoplasmic portion of the chain corresponds to 1–121; sequence MAPDPVAAET…FRELRATVER (121 aa). The Cytochrome b5 heme-binding domain occupies 17-94; it reads PRYFTWDEVA…MNSLLIGELS (78 aa). Residues 122–142 traverse the membrane as a helical segment; it reads MGLMKANHVFFLLYLLHILLL. The Lumenal segment spans residues 143 to 145; it reads DGA. The chain crosses the membrane as a helical span at residues 146–170; that stretch reads AWLTLWVFGTSFLPFLLCAVLLSAV. Residues 171–267 are Cytoplasmic-facing; that stretch reads QAQAGWLQHD…PYNHQHKYFF (97 aa). Residues 179-183 carry the Histidine box-1 motif; sequence HDFGH. The Histidine box-2 signature appears at 216 to 220; it reads HFQHH. Residues 268–288 traverse the membrane as a helical segment; sequence LIGPPALLPLYFQWYIFYFVI. Over 289 to 305 the chain is Lumenal; that stretch reads QRKKWVDLAWMITFYVR. Residues 306 to 326 form a helical membrane-spanning segment; sequence FFLTYVPLLGLKAFLGLFFIV. Over 327-444 the chain is Cytoplasmic; it reads RFLESNWFVW…QLWLDAYLHQ (118 aa). The short motif at 382-386 is the Histidine box-3 element; it reads QIEHH.

It belongs to the fatty acid desaturase type 1 family. Widely expressed, with highest levels in liver, brain, adrenal gland and heart. Highly expressed in fetal liver and brain.

Its subcellular location is the endoplasmic reticulum membrane. The protein resides in the mitochondrion. It carries out the reaction (8Z,11Z,14Z)-eicosatrienoyl-CoA + 2 Fe(II)-[cytochrome b5] + O2 + 2 H(+) = (5Z,8Z,11Z,14Z)-eicosatetraenoyl-CoA + 2 Fe(III)-[cytochrome b5] + 2 H2O. It catalyses the reaction (8Z,11Z,14Z,17Z)-eicosatetraenoyl-CoA + 2 Fe(II)-[cytochrome b5] + O2 + 2 H(+) = (5Z,8Z,11Z,14Z,17Z)-eicosapentaenoyl-CoA + 2 Fe(III)-[cytochrome b5] + 2 H2O. The catalysed reaction is (11E)-octadecenoyl-CoA + 2 Fe(II)-[cytochrome b5] + O2 + 2 H(+) = (5Z,11E)-octadecadienoyl-CoA + 2 Fe(III)-[cytochrome b5] + 2 H2O. It participates in lipid metabolism; polyunsaturated fatty acid biosynthesis. Its function is as follows. Acts as a front-end fatty acyl-coenzyme A (CoA) desaturase that introduces a cis double bond at carbon 5 located between a preexisting double bond and the carboxyl end of the fatty acyl chain. Involved in biosynthesis of highly unsaturated fatty acids (HUFA) from the essential polyunsaturated fatty acids (PUFA) linoleic acid (LA) (18:2n-6) and alpha-linolenic acid (ALA) (18:3n-3) precursors. Specifically, desaturates dihomo-gamma-linoleoate (DGLA) (20:3n-6) and eicosatetraenoate (ETA) (20:4n-3) to generate arachidonate (AA) (20:4n-6) and eicosapentaenoate (EPA) (20:5n-3), respectively. As a rate limiting enzyme for DGLA (20:3n-6) and AA (20:4n-6)-derived eicosanoid biosynthesis, controls the metabolism of inflammatory lipids like prostaglandin E2, critical for efficient acute inflammatory response and maintenance of epithelium homeostasis. Contributes to membrane phospholipid biosynthesis by providing AA (20:4n-6) as a major acyl chain esterified into phospholipids. In particular, regulates phosphatidylinositol-4,5-bisphosphate levels, modulating inflammatory cytokine production in T-cells. Also desaturates (11E)-octadecenoate (trans-vaccenoate)(18:1n-9), a metabolite in the biohydrogenation pathway of LA (18:2n-6). In terms of biological role, does not exhibit any catalytic activity toward 20:3n-6, but it may enhance FADS2 activity. The protein is Acyl-CoA (8-3)-desaturase of Homo sapiens (Human).